Consider the following 312-residue polypeptide: MNITFLGTSSGVPSLTRNVSSLALKLSQSAEVWLFDCGEGTQHQIMKSNIKSSQIKKIFITHMHGDHIYGLPGLLATLGLSGNSEGIEIYGPSELRSFINSALKSSFCKLSFPLHFVEVENFALKNKILFENNKIKVNCACLKHKIPAYGYRVSEKDKPGVFDIKKAESLKIAPGPIYSELQQGKKVVLPDGRTFDGKEFCGPPREGESFVYCTDTVFSESAVSLSKNADLLVHESTFSQTDERMAYEKLHSTTIMAAKTALLSNTKKLIITHLSPRYTNKNSITPGDLLKEAQKVFPNTHLAKDFLTAEIK.

Residues His62, His64, Asp66, His67, His144, Asp215, and His273 each coordinate Zn(2+). Asp66 functions as the Proton acceptor in the catalytic mechanism.

The protein belongs to the RNase Z family. Homodimer. Requires Zn(2+) as cofactor.

The enzyme catalyses Endonucleolytic cleavage of RNA, removing extra 3' nucleotides from tRNA precursor, generating 3' termini of tRNAs. A 3'-hydroxy group is left at the tRNA terminus and a 5'-phosphoryl group is left at the trailer molecule.. Its function is as follows. Zinc phosphodiesterase, which displays some tRNA 3'-processing endonuclease activity. Probably involved in tRNA maturation, by removing a 3'-trailer from precursor tRNA. This is Ribonuclease Z from Prochlorococcus marinus (strain AS9601).